A 176-amino-acid chain; its full sequence is Shikimate kinase (176 aa).

14–19 (GAGKST) is an ATP binding site. A Mg(2+)-binding site is contributed by Ser-18. Residues Asp-36, Arg-60, and Gly-83 each coordinate substrate. Arg-121 serves as a coordination point for ATP. Arg-140 serves as a coordination point for substrate.

Belongs to the shikimate kinase family. In terms of assembly, monomer. The cofactor is Mg(2+).

The protein localises to the cytoplasm. The catalysed reaction is shikimate + ATP = 3-phosphoshikimate + ADP + H(+). It participates in metabolic intermediate biosynthesis; chorismate biosynthesis; chorismate from D-erythrose 4-phosphate and phosphoenolpyruvate: step 5/7. In terms of biological role, catalyzes the specific phosphorylation of the 3-hydroxyl group of shikimic acid using ATP as a cosubstrate. The polypeptide is Shikimate kinase (Francisella tularensis subsp. tularensis (strain FSC 198)).